The primary structure comprises 307 residues: Taste receptor type 2 member 41 (307 aa).

At 1–7 (MQAALMA) the chain is on the extracellular side. The helical transmembrane segment at 8–28 (FFMLLFSLLSLLGIAANGFIV) threads the bilayer. At 29–40 (LVLGREWLRYGR) the chain is on the cytoplasmic side. Residues 41 to 61 (LLPLDMILISLGASRXCLQLV) form a helical membrane-spanning segment. The Extracellular portion of the chain corresponds to 62-88 (GTVHNFYYSARKVEYSGGLGRQFFHLH). The chain crosses the membrane as a helical span at residues 89–109 (WHFLNSATFWFCSWLSVLFCV). Topologically, residues 110 to 129 (KIANITHPTFLWLKWRFPGW) are cytoplasmic. A helical transmembrane segment spans residues 130–150 (VPWLLLGSVLISFIITLLFFW). The Extracellular portion of the chain corresponds to 151 to 183 (VNYPVYQELLIRKFSGNMTYKWNTRIETYYFPS). Asparagine 167 is a glycosylation site (N-linked (GlcNAc...) asparagine). The helical transmembrane segment at 184–204 (LKLVIWSIPFSVFLVSIMLLI) threads the bilayer. The Cytoplasmic portion of the chain corresponds to 205–234 (NSLRRHTQRMQHNGHSLQDPSTQAHTRALK). The helical transmembrane segment at 235–255 (SLISFLFLYALSFLSLIIDAT) threads the bilayer. Over 256 to 264 (KFISMQNDF) the chain is Extracellular. A helical membrane pass occupies residues 265–285 (YWPWQIAVYLCISVHPFILIF). Topologically, residues 286 to 307 (SNLKLRSMFWQVLLLARGFWVA) are cytoplasmic.

The protein belongs to the G-protein coupled receptor T2R family.

It is found in the membrane. In terms of biological role, receptor that may play a role in the perception of bitterness and is gustducin-linked. May play a role in sensing the chemical composition of the gastrointestinal content. The activity of this receptor may stimulate alpha gustducin, mediate PLC-beta-2 activation and lead to the gating of TRPM5. The polypeptide is Taste receptor type 2 member 41 (TAS2R41) (Gorilla gorilla gorilla (Western lowland gorilla)).